Consider the following 283-residue polypeptide: Lactoylglutathione lyase GLX1 (283 aa).

Alanine 2 carries the post-translational modification N-acetylalanine. 2 consecutive VOC domains span residues 17–141 (RFLH…LIQR) and 147–275 (PFCQ…LVDN). Histidine 20 is a Zn(2+) binding site. Arginine 24 provides a ligand contact to substrate. Glutamate 71 is a Zn(2+) binding site. Substrate is bound by residues asparagine 75 and histidine 89. Residues histidine 89, glutamate 137, and glutamine 150 each contribute to the Zn(2+) site. The active-site Proton donor/acceptor is the glutamate 137. Glutamine 150 and arginine 154 together coordinate substrate. An a divalent metal cation-binding site is contributed by glutamine 150. Glutamate 201 is a Zn(2+) binding site. Position 201 (glutamate 201) interacts with a divalent metal cation. A substrate-binding site is contributed by asparagine 205. Residue glutamine 219 coordinates a divalent metal cation. Position 251 to 252 (251 to 252 (PL)) interacts with substrate. Valine 271 provides a ligand contact to a divalent metal cation.

The protein belongs to the glyoxalase I family. Homodimer. The cofactor is Zn(2+). Post-translationally, phosphorylated by SnRK2.8.

The enzyme catalyses (R)-S-lactoylglutathione = methylglyoxal + glutathione. It participates in secondary metabolite metabolism; methylglyoxal degradation; (R)-lactate from methylglyoxal: step 1/2. Catalyzes the conversion of hemimercaptal, formed from methylglyoxal and glutathione, to S-lactoylglutathione. In Arabidopsis thaliana (Mouse-ear cress), this protein is Lactoylglutathione lyase GLX1.